Here is a 345-residue protein sequence, read N- to C-terminus: tRNA-specific 2-thiouridylase MnmA 1 (345 aa).

Residues 9–16 and Leu35 contribute to the ATP site; that span reads GMSGGIDS. Cys96 (nucleophile) is an active-site residue. An intrachain disulfide couples Cys96 to Cys191. Gly120 serves as a coordination point for ATP. The interval 138–140 is interaction with tRNA; it reads KDQ. The active-site Cysteine persulfide intermediate is Cys191. The tract at residues 293 to 294 is interaction with tRNA; sequence RY.

This sequence belongs to the MnmA/TRMU family.

Its subcellular location is the cytoplasm. The catalysed reaction is S-sulfanyl-L-cysteinyl-[protein] + uridine(34) in tRNA + AH2 + ATP = 2-thiouridine(34) in tRNA + L-cysteinyl-[protein] + A + AMP + diphosphate + H(+). Its function is as follows. Catalyzes the 2-thiolation of uridine at the wobble position (U34) of tRNA, leading to the formation of s(2)U34. The polypeptide is tRNA-specific 2-thiouridylase MnmA 1 (Aliarcobacter butzleri (strain RM4018) (Arcobacter butzleri)).